Here is a 199-residue protein sequence, read N- to C-terminus: Lysine exporter LysE (199 aa).

A run of 5 helical transmembrane segments spans residues 6–26 (VVGF…NAFV), 42–62 (LCTV…GALI), 68–88 (ALNV…LLAA), 144–164 (WLFG…LGFG), and 178–198 (WRIL…SLTV).

It belongs to the LysE/ArgO transporter (TC 2.A.75) family.

The protein localises to the cell inner membrane. Functionally, catalyzes the efflux of L-lysine. This Mycobacterium bovis (strain ATCC BAA-935 / AF2122/97) protein is Lysine exporter LysE.